Reading from the N-terminus, the 793-residue chain is MSNQMEFIMQLYMMNLMKQQQQMQLQLPQQQQQQQLAGYTYTQNEDISSSTSVQQQQQQQQEQLQQPQPDLRKTRTHKRISSQNTNCSSSRSCSPNSNLIAFQPQQYPGATAATPSTPNSHPSNLVNQMLLQSLPPLTQLMLQQQQQQHLLTTSNLLLTPTHTPSSLGKQDPLQHPLLLGQFAGSEQMATNNFLQSSTVTSTPIEREKAATPAPSAGATAGNLSAAQVKFEQESADDDEDDDKPLSSLTSCSSSGHTNASSEKLLLSGVHPLESTTDSLDSPSMYTPVKQPADSSYGLITPVDSDLTPNTPLQPTQTISLLTPPSSEQSKSLVSLSAASGLDALLQNEEVLKNLRKVSSYLECENSLCRQENLREHFHCHEEPCQGKILSKKDDIIRHLKWHKKRKESLKLGFARFSSSDDCAPAYGEGCAYNWKQTHYHCVYEHCPKVYVSTSDVQMHANFHRKDSEIVNEGFRRFRAHETCRIEDCPFFGKKISHYHCCREGCTHTFKNKADMDKHKTYHLKDHQLKMDGFKKILKTEVCPFDACKFSTVCNHIHCVREGCDYILHSSSQMISHKRKHDRQDGEQAYQQFKIKQDVEESSLDAMPQQQQQQQQQQPTSLSQSQSSSSVCGGSNTSTPLSSLSAEHFLARKRGRPPKKIQLPADAQQSEAKRLKVEDESSNPAMLLPQSQPAAAVHPLTSGLFPGLLPAAAAPGVDPTAPNFQLTHLMALFQLQNPLFYQNLYPGMTQNSSMLGNLAALSAASAAAAAAAAANGAGVQQPKAEFSFKPEFKE.

Residues 44-53 (NEDISSSTSV) are compositionally biased toward polar residues. Disordered stretches follow at residues 44-101 (NEDI…NLIA), 199-259 (VTST…HTNA), and 272-296 (LEST…DSSY). 3 stretches are compositionally biased toward low complexity: residues 54–68 (QQQQ…QQPQ), 81–98 (SSQN…PNSN), and 210–221 (ATPAPSAGATAG). At threonine 211 the chain carries Phosphothreonine. Serine 215 bears the Phosphoserine mark. Over residues 233 to 242 (ESADDDEDDD) the composition is skewed to acidic residues. The span at 245-254 (LSSLTSCSSS) shows a compositional bias: low complexity. The span at 273–284 (ESTTDSLDSPSM) shows a compositional bias: polar residues. The C2H2-type 1; atypical zinc-finger motif lies at 377-402 (FHCHEEPCQGKILSKKDDIIRHLKWH). 3 consecutive C2H2-type zinc fingers follow at residues 439–463 (YHCV…ANFH), 498–522 (YHCC…KTYH), and 556–580 (IHCV…KRKH). A disordered region spans residues 599–682 (EESSLDAMPQ…RLKVEDESSN (84 aa)). The segment covering 608 to 629 (QQQQQQQQQQPTSLSQSQSSSS) has biased composition (low complexity). Residues 630 to 644 (VCGGSNTSTPLSSLS) are compositionally biased toward polar residues. The a.T hook DNA-binding region spans 650–662 (ARKRGRPPKKIQL).

As to expression, expressed in a specific subset of neuroblasts in the ventral nerve cord and the procephalic region in the embryo. Expressed in many, if not all, late delaminating NBs, and in early NBs, but only after they have undergone several rounds of ganglion mother cell-producing divisions.

It localises to the nucleus. Its function is as follows. Transcription factor that specifies expression of key genes in developing central nervous system (CNS). Essential for many, if not all, late developing neuroblastoma (NB) sublineages. Binds to the 5'-[CG]C[CT][CT]AAAAA[AT]-3' DNA sequence, like hb, suggesting that cas and hb act as a late regulators in early and late CNS NB sublineage, respectively. Acts by repressing expression of nub/pdm-1 and pdm2/pdm-2 POU genes, and restrict their pattern of expression in appropriate cells. Required for a full expression of vvl/drifter and acj6/I-POU; it is however unknown whether it directly activates these genes. Controls engrailed (en) expression in the ventral nerve cord. This chain is Transcription factor castor (cas), found in Drosophila melanogaster (Fruit fly).